The sequence spans 359 residues: 4'-phosphopantetheinyl transferase A (359 aa).

This sequence belongs to the P-Pant transferase superfamily.

It carries out the reaction apo-[ACP] + CoA = holo-[ACP] + adenosine 3',5'-bisphosphate + H(+). Its activity is regulated as follows. Activity is inhibited bythe antifunfal copmpounds PD 404,182, 6-nitroso-1,2-benzopyrone, and calmidazolium chloride with IC(50) values of 3.9 uM, 35.2 uM, and 19.2 uM, respectively. Its function is as follows. Acyl-carrier-protein synthase that transfers the 4'-phosphopantetheine moiety from coenzyme A to a Ser of an acyl-carrier-protein. The 4'-phosphopantetheine (4'-PPT) portion of CoA provides the essential prosthetic group for a number of carrier proteins and multi-domain enzymes, priming them for the acceptance of acyl building blocks in fatty acid synthesis and many aspects of secondary metabolism mediated by polyketide synthases (PKSs) and non-ribosomal peptide synthetases (NRPSs). PptA is able to transfer the cofactor to a broad range of enzymes with acyl- or peptidyl-carrier protein domains and activates target enzymes involved in the synthesis of lysine, but also secondary metabolites including gliotoxin, fumigaclavine C, fumiquinazole A, fumiquinazoline C, pyripyroprene A, fumagillin, the siderophores triacetylfusarinine C (TAFC) and ferricrocin (FC), and dihydroxy naphthalene (DHN)-melanin. Plays an essential role in virulence. The sequence is that of 4'-phosphopantetheinyl transferase A from Aspergillus fumigatus (strain ATCC MYA-4609 / CBS 101355 / FGSC A1100 / Af293) (Neosartorya fumigata).